A 397-amino-acid chain; its full sequence is Multidrug resistance protein MdtH (397 aa).

11 helical membrane-spanning segments follow: residues 11 to 31, 32 to 52, 71 to 91, 94 to 114, 137 to 157, 163 to 183, 211 to 231, 242 to 262, 291 to 311, 340 to 360, and 366 to 386; these read WFLA…MPMI, SLRF…ALGL, FGAR…FASL, AQSG…GCLF, LLMM…SWLL, YVCL…LLIL, LVLI…IFPI, AVGW…YPLA, FANT…GIVI, LALG…YAML, and LPWL…VNCF.

The protein belongs to the major facilitator superfamily. DHA1 family. MdtH (TC 2.A.1.2.21) subfamily.

The protein resides in the cell inner membrane. The protein is Multidrug resistance protein MdtH of Aeromonas hydrophila subsp. hydrophila (strain ATCC 7966 / DSM 30187 / BCRC 13018 / CCUG 14551 / JCM 1027 / KCTC 2358 / NCIMB 9240 / NCTC 8049).